Here is a 115-residue protein sequence, read N- to C-terminus: Promotilin (115 aa).

Positions 1-25 (MLSRKATAILLVVHAAAMLASQTEG) are cleaved as a signal peptide. The tract at residues 43 to 73 (RYKGQKKSLSVQQRSEEVGPVDPAEPREEKQ) is disordered.

This sequence belongs to the motilin family.

The protein resides in the secreted. In terms of biological role, plays an important role in the regulation of interdigestive gastrointestinal motility and indirectly causes rhythmic contraction of duodenal and colonic smooth muscle. This is Promotilin (MLN) from Ovis aries (Sheep).